The sequence spans 216 residues: MEKFNVHTGVVAPLDRENVDTDAIIPKQFLKSIKRTGFGPNAFDEWRYLDHGEPGQDNSKRPLNPDFVLNQPRYQRASVLLARKNFGCGSSREHAPWALQQYGFRAIIAPSFADIFFNNCYKNGLLPIVLTEQQVDHLFNETYAFNGYQLTIDLDAQVVRAPDGREYPFEITAFRKYCLLNGFDDIGLTLRHAEKIRQFEAERLAKQPWLNNKLVG.

Belongs to the LeuD family. LeuD type 1 subfamily. Heterodimer of LeuC and LeuD.

It catalyses the reaction (2R,3S)-3-isopropylmalate = (2S)-2-isopropylmalate. It functions in the pathway amino-acid biosynthesis; L-leucine biosynthesis; L-leucine from 3-methyl-2-oxobutanoate: step 2/4. In terms of biological role, catalyzes the isomerization between 2-isopropylmalate and 3-isopropylmalate, via the formation of 2-isopropylmaleate. In Burkholderia thailandensis (strain ATCC 700388 / DSM 13276 / CCUG 48851 / CIP 106301 / E264), this protein is 3-isopropylmalate dehydratase small subunit.